Consider the following 194-residue polypeptide: Protein GrpE (194 aa).

A compositionally biased stretch (polar residues) spans Met-1 to Gln-12. Residues Met-1–Glu-39 are disordered.

This sequence belongs to the GrpE family. As to quaternary structure, homodimer.

The protein localises to the cytoplasm. Participates actively in the response to hyperosmotic and heat shock by preventing the aggregation of stress-denatured proteins, in association with DnaK and GrpE. It is the nucleotide exchange factor for DnaK and may function as a thermosensor. Unfolded proteins bind initially to DnaJ; upon interaction with the DnaJ-bound protein, DnaK hydrolyzes its bound ATP, resulting in the formation of a stable complex. GrpE releases ADP from DnaK; ATP binding to DnaK triggers the release of the substrate protein, thus completing the reaction cycle. Several rounds of ATP-dependent interactions between DnaJ, DnaK and GrpE are required for fully efficient folding. This chain is Protein GrpE, found in Erwinia tasmaniensis (strain DSM 17950 / CFBP 7177 / CIP 109463 / NCPPB 4357 / Et1/99).